We begin with the raw amino-acid sequence, 338 residues long: DNA-directed RNA polymerase subunit alpha (338 aa).

The interval 1-226 (MLIAQRPTLS…ELFGLARELN (226 aa)) is alpha N-terminal domain (alpha-NTD). Residues 240 to 338 (DEQLAADLAL…DDAFVEDEQY (99 aa)) are alpha C-terminal domain (alpha-CTD).

Belongs to the RNA polymerase alpha chain family. As to quaternary structure, homodimer. The RNAP catalytic core consists of 2 alpha, 1 beta, 1 beta' and 1 omega subunit. When a sigma factor is associated with the core the holoenzyme is formed, which can initiate transcription.

The enzyme catalyses RNA(n) + a ribonucleoside 5'-triphosphate = RNA(n+1) + diphosphate. Functionally, DNA-dependent RNA polymerase catalyzes the transcription of DNA into RNA using the four ribonucleoside triphosphates as substrates. The protein is DNA-directed RNA polymerase subunit alpha of Nocardioides sp. (strain ATCC BAA-499 / JS614).